Reading from the N-terminus, the 340-residue chain is Cathepsin S (340 aa).

Residues Met-1–Leu-17 form the signal peptide. A propeptide spans Val-18 to Thr-122 (activation peptide). A glycan (N-linked (GlcNAc...) asparagine) is linked at Asn-120. 4 disulfide bridges follow: Cys-134–Cys-233, Cys-144–Cys-189, Cys-178–Cys-222, and Cys-281–Cys-329. Cys-147 is a catalytic residue. Active-site residues include His-287 and Asn-307.

It belongs to the peptidase C1 family. In terms of tissue distribution, widely expressed with highest expression found in non-skeletal tissues. Relatively high levels found in skeletal tissues. Expressed in spleen, B cells, dendritic cells and macrophages.

Its subcellular location is the lysosome. The protein resides in the secreted. The protein localises to the cytoplasmic vesicle. It is found in the phagosome. The catalysed reaction is Similar to cathepsin L, but with much less activity on Z-Phe-Arg-|-NHMec, and more activity on the Z-Val-Val-Arg-|-Xaa compound.. Thiol protease. Key protease responsible for the removal of the invariant chain from MHC class II molecules and MHC class II antigen presentation. The bond-specificity of this proteinase is in part similar to the specificities of cathepsin L. The polypeptide is Cathepsin S (Ctss) (Mus musculus (Mouse)).